The chain runs to 146 residues: U1 small nuclear ribonucleoprotein C (146 aa).

A Matrin-type zinc finger spans residues 4–36; that stretch reads YYCDYCDTYLTHDSPSVRKTHCTGRKHRDNVKF. A disordered region spans residues 64–96; that stretch reads NNPFAGGPSSAPPKPSGVSIPPPNMGAPPRPGM. Residues 73-96 show a composition bias toward pro residues; the sequence is SAPPKPSGVSIPPPNMGAPPRPGM.

The protein belongs to the U1 small nuclear ribonucleoprotein C family. As to quaternary structure, U1 snRNP is composed of the 7 core Sm proteins B/B', D1, D2, D3, E, F and G that assemble in a heptameric protein ring on the Sm site of the small nuclear RNA to form the core snRNP, and at least 3 U1 snRNP-specific proteins U1-70K, U1-A and U1-C. U1-C interacts with U1 snRNA and the 5' splice-site region of the pre-mRNA.

It localises to the nucleus. Functionally, component of the spliceosomal U1 snRNP, which is essential for recognition of the pre-mRNA 5' splice-site and the subsequent assembly of the spliceosome. U1-C is directly involved in initial 5' splice-site recognition for both constitutive and regulated alternative splicing. The interaction with the 5' splice-site seems to precede base-pairing between the pre-mRNA and the U1 snRNA. Stimulates commitment or early (E) complex formation by stabilizing the base pairing of the 5' end of the U1 snRNA and the 5' splice-site region. The polypeptide is U1 small nuclear ribonucleoprotein C (Drosophila pseudoobscura pseudoobscura (Fruit fly)).